We begin with the raw amino-acid sequence, 82 residues long: Small ribosomal subunit protein bS18 (82 aa).

A disordered region spans residues 1-20 (MAEVSSSTVRRPFHRRRKTC).

This sequence belongs to the bacterial ribosomal protein bS18 family. As to quaternary structure, part of the 30S ribosomal subunit. Forms a tight heterodimer with protein bS6.

Binds as a heterodimer with protein bS6 to the central domain of the 16S rRNA, where it helps stabilize the platform of the 30S subunit. In Allorhizobium ampelinum (strain ATCC BAA-846 / DSM 112012 / S4) (Agrobacterium vitis (strain S4)), this protein is Small ribosomal subunit protein bS18.